Consider the following 461-residue polypeptide: BSD domain-containing protein 1 (461 aa).

Phosphoserine occurs at positions 123 and 197. The 53-residue stretch at W177–E229 folds into the BSD domain. Residues K239 to R384 form a disordered region. Residues P250–L259 are compositionally biased toward acidic residues. Over residues L295–T318 the composition is skewed to low complexity. Residue T387 is modified to Phosphothreonine. The interval V398–F430 is disordered. Positions N402 to D421 are enriched in polar residues. Residues S418, S419, and S449 each carry the phosphoserine modification.

This Bos taurus (Bovine) protein is BSD domain-containing protein 1 (BSDC1).